We begin with the raw amino-acid sequence, 338 residues long: Phospho-2-dehydro-3-deoxyheptonate aldolase (338 aa).

This sequence belongs to the class-I DAHP synthase family. As to quaternary structure, homotetramer. It depends on a divalent metal cation as a cofactor.

It carries out the reaction D-erythrose 4-phosphate + phosphoenolpyruvate + H2O = 7-phospho-2-dehydro-3-deoxy-D-arabino-heptonate + phosphate. Its pathway is metabolic intermediate biosynthesis; chorismate biosynthesis; chorismate from D-erythrose 4-phosphate and phosphoenolpyruvate: step 1/7. With respect to regulation, inhibited by L-phenylalanine and L-tyrosine. Its function is as follows. Catalyzes the condensation of phosphoenolpyruvate (PEP) and D-erythrose-4-phosphate (E4P) giving rise to 3-deoxy-D-arabino-heptulosonate-7-phosphate (DAHP). In Thermotoga maritima (strain ATCC 43589 / DSM 3109 / JCM 10099 / NBRC 100826 / MSB8), this protein is Phospho-2-dehydro-3-deoxyheptonate aldolase (aroF).